A 454-amino-acid polypeptide reads, in one-letter code: CCA-adding enzyme (454 aa).

ATP is bound by residues Ser-59 and Arg-62. Ser-59 and Arg-62 together coordinate CTP. Asp-71, Asp-73, and Asp-125 together coordinate Mg(2+). 3 residues coordinate ATP: His-148, Lys-167, and Tyr-176. Positions 148, 167, and 176 each coordinate CTP.

Belongs to the tRNA nucleotidyltransferase/poly(A) polymerase family. Archaeal CCA-adding enzyme subfamily. As to quaternary structure, homodimer. The cofactor is Mg(2+).

It catalyses the reaction a tRNA precursor + 2 CTP + ATP = a tRNA with a 3' CCA end + 3 diphosphate. The catalysed reaction is a tRNA with a 3' CCA end + 2 CTP + ATP = a tRNA with a 3' CCACCA end + 3 diphosphate. Catalyzes the addition and repair of the essential 3'-terminal CCA sequence in tRNAs without using a nucleic acid template. Adds these three nucleotides in the order of C, C, and A to the tRNA nucleotide-73, using CTP and ATP as substrates and producing inorganic pyrophosphate. tRNA 3'-terminal CCA addition is required both for tRNA processing and repair. Also involved in tRNA surveillance by mediating tandem CCA addition to generate a CCACCA at the 3' terminus of unstable tRNAs. While stable tRNAs receive only 3'-terminal CCA, unstable tRNAs are marked with CCACCA and rapidly degraded. The polypeptide is CCA-adding enzyme (Methanosarcina acetivorans (strain ATCC 35395 / DSM 2834 / JCM 12185 / C2A)).